Consider the following 532-residue polypeptide: Egg peptide speract receptor (532 aa).

The first 30 residues, 1-30 (MGLPMMLQQYCWAACLVICIAISSVDDVGA), serve as a signal peptide directing secretion. Topologically, residues 31–491 (EQNYGREAVE…VVCEGSTAPP (461 aa)) are extracellular. 4 consecutive SRCR domains span residues 43–144 (IRLI…VECL), 153–257 (LRMI…VVCK), 264–366 (IRLM…VVCA), and 382–485 (VRIV…VVCE). 12 disulfides stabilise this stretch: Cys-68–Cys-133, Cys-81–Cys-143, Cys-112–Cys-122, Cys-178–Cys-244, Cys-191–Cys-256, Cys-223–Cys-233, Cys-289–Cys-355, Cys-302–Cys-365, Cys-335–Cys-345, Cys-406–Cys-475, Cys-419–Cys-484, and Cys-454–Cys-465. N-linked (GlcNAc...) asparagine glycosylation is found at Asn-78 and Asn-115. A glycan (N-linked (GlcNAc...) asparagine) is linked at Asn-459. A helical transmembrane segment spans residues 492–520 (SGMSIAVIGGAAGGGVAGLAVAAFAFYYI). Over 521 to 532 (KFVKPAGGGGQA) the chain is Cytoplasmic.

The protein localises to the membrane. Functionally, receptor for the egg peptide speract. This chain is Egg peptide speract receptor, found in Strongylocentrotus purpuratus (Purple sea urchin).